We begin with the raw amino-acid sequence, 316 residues long: Pantothenate kinase (316 aa).

95–102 (GSVAVGKS) serves as a coordination point for ATP.

This sequence belongs to the prokaryotic pantothenate kinase family.

It localises to the cytoplasm. It carries out the reaction (R)-pantothenate + ATP = (R)-4'-phosphopantothenate + ADP + H(+). It participates in cofactor biosynthesis; coenzyme A biosynthesis; CoA from (R)-pantothenate: step 1/5. In Salmonella agona (strain SL483), this protein is Pantothenate kinase.